Here is an 86-residue protein sequence, read N- to C-terminus: Palustrin-3b (86 aa).

Residues 1–22 form the signal peptide; it reads MFTLKKPLLLIVLLGIISLSLC. Residues 23 to 36 constitute a propeptide that is removed on maturation; that stretch reads EQERNADEDEESEI. A disulfide bridge links cysteine 81 with cysteine 86.

In terms of tissue distribution, expressed by the skin glands.

The protein resides in the secreted. Functionally, antimicrobial peptide. In Odorrana versabilis (Chinese bamboo leaf odorous frog), this protein is Palustrin-3b.